Consider the following 336-residue polypeptide: Ketol-acid reductoisomerase (NADP(+)) (336 aa).

The KARI N-terminal Rossmann domain maps to 3–183 (AKMYYDRDVD…GCTKAGVLET (181 aa)). NADP(+) contacts are provided by residues 26–29 (YGSQ), Arg-49, Ser-52, Ser-54, and 84–87 (DEQQ). His-109 is a catalytic residue. Gly-135 provides a ligand contact to NADP(+). Residues 184–329 (TFKEETETDL…KELRDQMPFI (146 aa)) form the KARI C-terminal knotted domain. Mg(2+) contacts are provided by Asp-192, Glu-196, Glu-228, and Glu-232. Ser-253 lines the substrate pocket.

This sequence belongs to the ketol-acid reductoisomerase family. Mg(2+) serves as cofactor.

It carries out the reaction (2R)-2,3-dihydroxy-3-methylbutanoate + NADP(+) = (2S)-2-acetolactate + NADPH + H(+). The catalysed reaction is (2R,3R)-2,3-dihydroxy-3-methylpentanoate + NADP(+) = (S)-2-ethyl-2-hydroxy-3-oxobutanoate + NADPH + H(+). It functions in the pathway amino-acid biosynthesis; L-isoleucine biosynthesis; L-isoleucine from 2-oxobutanoate: step 2/4. Its pathway is amino-acid biosynthesis; L-valine biosynthesis; L-valine from pyruvate: step 2/4. In terms of biological role, involved in the biosynthesis of branched-chain amino acids (BCAA). Catalyzes an alkyl-migration followed by a ketol-acid reduction of (S)-2-acetolactate (S2AL) to yield (R)-2,3-dihydroxy-isovalerate. In the isomerase reaction, S2AL is rearranged via a Mg-dependent methyl migration to produce 3-hydroxy-3-methyl-2-ketobutyrate (HMKB). In the reductase reaction, this 2-ketoacid undergoes a metal-dependent reduction by NADPH to yield (R)-2,3-dihydroxy-isovalerate. The sequence is that of Ketol-acid reductoisomerase (NADP(+)) from Deinococcus radiodurans (strain ATCC 13939 / DSM 20539 / JCM 16871 / CCUG 27074 / LMG 4051 / NBRC 15346 / NCIMB 9279 / VKM B-1422 / R1).